The following is a 195-amino-acid chain: Probable chorismate pyruvate-lyase (195 aa).

Residues arginine 79, leucine 117, and glutamate 180 each contribute to the substrate site.

The protein belongs to the UbiC family.

The protein localises to the cytoplasm. It carries out the reaction chorismate = 4-hydroxybenzoate + pyruvate. The protein operates within cofactor biosynthesis; ubiquinone biosynthesis. Its function is as follows. Removes the pyruvyl group from chorismate, with concomitant aromatization of the ring, to provide 4-hydroxybenzoate (4HB) for the ubiquinone pathway. This chain is Probable chorismate pyruvate-lyase, found in Ralstonia nicotianae (strain ATCC BAA-1114 / GMI1000) (Ralstonia solanacearum).